The primary structure comprises 369 residues: Anhydro-N-acetylmuramic acid kinase (369 aa).

12–19 (GTSLDGVD) serves as a coordination point for ATP.

This sequence belongs to the anhydro-N-acetylmuramic acid kinase family.

The enzyme catalyses 1,6-anhydro-N-acetyl-beta-muramate + ATP + H2O = N-acetyl-D-muramate 6-phosphate + ADP + H(+). The protein operates within amino-sugar metabolism; 1,6-anhydro-N-acetylmuramate degradation. Its pathway is cell wall biogenesis; peptidoglycan recycling. Functionally, catalyzes the specific phosphorylation of 1,6-anhydro-N-acetylmuramic acid (anhMurNAc) with the simultaneous cleavage of the 1,6-anhydro ring, generating MurNAc-6-P. Is required for the utilization of anhMurNAc either imported from the medium or derived from its own cell wall murein, and thus plays a role in cell wall recycling. This chain is Anhydro-N-acetylmuramic acid kinase, found in Escherichia coli (strain SE11).